A 260-amino-acid chain; its full sequence is 5'-nucleotidase SurE (260 aa).

The a divalent metal cation site is built by Asp-8, Asp-9, Ser-43, and Asn-96.

Belongs to the SurE nucleotidase family. A divalent metal cation serves as cofactor.

Its subcellular location is the cytoplasm. It carries out the reaction a ribonucleoside 5'-phosphate + H2O = a ribonucleoside + phosphate. In terms of biological role, nucleotidase that shows phosphatase activity on nucleoside 5'-monophosphates. In Ruegeria sp. (strain TM1040) (Silicibacter sp.), this protein is 5'-nucleotidase SurE.